Reading from the N-terminus, the 261-residue chain is Syntaxin-7 (261 aa).

Ser2 bears the N-acetylserine mark. The Cytoplasmic segment spans residues 2–238; that stretch reads SYTPGIGGDP…NYQRKSRKTL (237 aa). Position 4 is a phosphothreonine (Thr4). A coiled-coil region spans residues 47 to 68; the sequence is ELRQQLQQEQQYTNQLAKETDK. The residue at position 79 (Thr79) is a Phosphothreonine. Residues Ser125, Ser126, Ser129, and Ser205 each carry the phosphoserine modification. Residues 128–148 form a disordered region; that stretch reads VSGGFPEDSSKEKNFVSWESQ. The t-SNARE coiled-coil homology domain occupies 165 to 227; the sequence is LRLIHERESS…QQANQQLSRA (63 aa). Residues 239–259 form a helical; Anchor for type IV membrane protein membrane-spanning segment; sequence CIIILILVVGIVIIFFIVWGL. Topologically, residues 260-261 are vesicular; that stretch reads KG.

It belongs to the syntaxin family. In terms of assembly, interacts with VPS11, VPS16 and VPS18. Interacts with VPS33A. Forms a SNARE complex with VTI1B, STX8 and VAMP8 which functions in the homotypic fusion of late endosomes. Component of the SNARE complex composed of STX7, STX8, VAMP7 and VTI1B that is required for heterotypic fusion of late endosomes with lysosomes. Interacts with TPC1. As to expression, detected in all tissues tested. Highest expression is found in kidney followed by lung, spleen, heart and brain. Lower expression, in skeletal muscle, liver and testis.

The protein resides in the early endosome membrane. May be involved in protein trafficking from the plasma membrane to the early endosome (EE) as well as in homotypic fusion of endocytic organelles. Mediates the endocytic trafficking from early endosomes to late endosomes and lysosomes. The protein is Syntaxin-7 (Stx7) of Rattus norvegicus (Rat).